A 624-amino-acid polypeptide reads, in one-letter code: Probable potassium transport system protein Kup (624 aa).

Transmembrane regions (helical) follow at residues 13-33 (LALGALGVVFGDIGTSPLYTM), 52-72 (ILSLIFWALILVVSLKYVLVI), 102-122 (WIIMSLGFLGASLFFGDSLIT), 139-159 (PALHPFILPLALGILVGLFAI), 170-190 (LFGPIMLLWFAVLGVLGAIGI), 208-228 (FFMTHGTAGFLILGAVVLAIT), 249-269 (WFGFVLPALVVNYFGQGALLL), 291-311 (MVALATAATVIASQAVISGAF), 339-359 (IYIPFVNWTLAAGVALLVLGF), 368-388 (AYGIAVTATFAIDTVLLALLM), 399-419 (TLVAAALFLTLDLAFFGANAV), and 421-441 (IPEGGWFPLVVAVVVFTILVT).

It belongs to the HAK/KUP transporter (TC 2.A.72) family.

Its subcellular location is the cell inner membrane. The enzyme catalyses K(+)(in) + H(+)(in) = K(+)(out) + H(+)(out). Transport of potassium into the cell. Likely operates as a K(+):H(+) symporter. This Thiobacillus denitrificans (strain ATCC 25259 / T1) protein is Probable potassium transport system protein Kup.